Consider the following 199-residue polypeptide: Recombination protein RecR (199 aa).

The C4-type zinc finger occupies 57-72; sequence CSICGNITEDDPCDIC. The region spanning 80 to 176 is the Toprim domain; that stretch reads KAVLVVEDSK…KVTRLAHGLS (97 aa).

The protein belongs to the RecR family.

Its function is as follows. May play a role in DNA repair. It seems to be involved in an RecBC-independent recombinational process of DNA repair. It may act with RecF and RecO. The protein is Recombination protein RecR of Pediococcus pentosaceus (strain ATCC 25745 / CCUG 21536 / LMG 10740 / 183-1w).